Here is a 495-residue protein sequence, read N- to C-terminus: MSLLIRGATVVTHEESYPADVLCVDGLIRAIGPNLEPPTDCEILDGSGQYLMPGGIDPHTHMQLPFMGTVASEDFFSGTAAGLAGGTTSIIDFVIPNPQQSLLEAFHTWRGWAQKSASDYGFHVAITWWSEQVAEEMGELVAKHGVNSFKHFMAYKNAIMAADDTLVASFERCLQLGAVPTVHAENGELVYHLQKKLLAQGMTGPEAHPLSRPSQVEGEAASRAIRIAETIGTPLYVVHISSREALDEITYARAKGQPVYGEVLPGHLLLDDSVYRDPDWATAAGYVMSPPFRPREHQEALWRGLQSGNLHTTATDHCCFCAEQKAMGRDDFSRIPNGTAGIEDRMAVLWDAGVNSGRLSMHEFVALTSTNTAKIFNLFPRKGAIRVGADADLVLWDPQGTRTLSAQTHHQRVDFNIFEGRTVRGVPSHTISQGKVLWADGDLRRRGRGGAVCGTAGVSVGVRGAGATRRTAAPDARSALRPLGLLRSPSPASQI.

Zn(2+) contacts are provided by His59, His61, and Lys150. N6-carboxylysine is present on Lys150. Tyr155 lines the substrate pocket. Zn(2+) is bound by residues His183 and His239. Ser289 lines the substrate pocket. Asp316 lines the Zn(2+) pocket. Asn337 serves as a coordination point for substrate.

This sequence belongs to the metallo-dependent hydrolases superfamily. Hydantoinase/dihydropyrimidinase family. In terms of assembly, homotetramer. Zn(2+) serves as cofactor. In terms of processing, carboxylation allows a single lysine to coordinate two zinc ions.

The catalysed reaction is 5,6-dihydrouracil + H2O = 3-(carbamoylamino)propanoate + H(+). Catalyzes the hydrolysis of dihydropyrimidines and of the structurally related DL-5-mono-substituted hydantoins, to produce N-carbamoyl-D-amino acids. The chain is D-hydantoinase/dihydropyrimidinase from Pseudomonas putida (Arthrobacter siderocapsulatus).